The primary structure comprises 751 residues: WD repeat-containing protein 91 (751 aa).

The stretch at 188–212 (IQEENESLRHKLFALQAESSRMKKE) forms a coiled coil. Residues 264–395 (LSQSKKGPAR…ASSTESVGVR (132 aa)) form a disordered region. Residues 278-287 (SGASPTQTGS) show a composition bias toward polar residues. Positions 334 to 346 (RLQEHGKERRELL) are enriched in basic and acidic residues. A compositionally biased stretch (polar residues) spans 377–391 (QAETSTKMPASSTES). 7 WD repeats span residues 410 to 449 (EHHS…QTKA), 452 to 492 (ISKS…NLCE), 497 to 559 (EDMP…QQLQ), 564 to 603 (PEPI…CAMS), 606 to 645 (AHDG…LKIS), 668 to 706 (VQFP…KVLE), and 713 to 751 (GHRA…AQKS).

Belongs to the WD repeat WDR91 family.

It is found in the early endosome membrane. Its subcellular location is the late endosome membrane. Functions as a negative regulator of the PI3 kinase/PI3K activity associated with endosomal membranes. By modifying the phosphatidylinositol 3-phosphate/PtdInsP3 content of endosomal membranes may regulate endosome fusion, recycling, sorting and early to late endosome transport. In Gallus gallus (Chicken), this protein is WD repeat-containing protein 91.